The following is an 885-amino-acid chain: Translation initiation factor IF-2 (885 aa).

Disordered stretches follow at residues 55–150 and 269–300; these read IPDK…ADVT and NTIN…EAVT. Residues 65–146 are compositionally biased toward basic and acidic residues; that stretch reads EPKAKKEPKK…AEAPKPKESL (82 aa). The segment covering 281–290 has biased composition (basic residues); the sequence is RRARKKHKKP. The tr-type G domain maps to 384–553; sequence PRAPVITIMG…LLQADLLELK (170 aa). The tract at residues 393–400 is G1; that stretch reads GHVDHGKT. A GTP-binding site is contributed by 393–400; that stretch reads GHVDHGKT. Residues 418–422 form a G2 region; it reads GITQH. The tract at residues 439-442 is G3; it reads DTPG. Residues 439 to 443 and 493 to 496 contribute to the GTP site; these read DTPGH and NKMD. Residues 493 to 496 form a G4 region; the sequence is NKMD. The interval 529–531 is G5; it reads SAK.

It belongs to the TRAFAC class translation factor GTPase superfamily. Classic translation factor GTPase family. IF-2 subfamily.

The protein localises to the cytoplasm. Functionally, one of the essential components for the initiation of protein synthesis. Protects formylmethionyl-tRNA from spontaneous hydrolysis and promotes its binding to the 30S ribosomal subunits. Also involved in the hydrolysis of GTP during the formation of the 70S ribosomal complex. The polypeptide is Translation initiation factor IF-2 (Campylobacter concisus (strain 13826)).